The primary structure comprises 5641 residues: MYTDKFRFKTGVSSFQILLAWTVLLKDYIGSSGVSFSFSDSTQCHKGTGKIDLELDEHDTIGLLSRRIKEQLLVKSDSNEYLSFKTHLDISSGEPENLNGHLIGSTNGHKKQWENDSADDKRGQHPREIVDWTIKCVLSEDGRGMKTTAIPKLSTASSRQGLRLMYQLEHVLRHIHLSTEGTLVYKIDTATKSDLNDIWKWNFNNPPLSERTVLEIFTENVQRYPTATAVNAWDGDLSYQELDRLSTEFSFHLAYAGVKRGNIVPLFFEKSMWTPVAIWAVIKTGAAFVLLDEVLPESRLQQLGQVIRQEIIVALASSSQESRAKLLGTQVIIIDSYYLETAASVPSEFKTQPQIQPSDLIYIVFTSGTTGVPKAVMIQHSNVSAFARSLRTISDVGPNSRIVALSSYAFDVSLGNLFLSLLSGCCLCIPSSWECRNTVPRVLQDYQITHAQMTPSISKMLRPCQLSTLEVLELSGEQCTEDVLARWQETPIRVMNTYSPAECTITTVGNGNVLTSSKSSIIGKGLGNCCWVLDPIDHDRLSPVGGIGELVLEGPSVGMGYLHDPRATALKFFEDPEWLLKGLPGVSPGRKGRLYRTGDLVRYTEDGSIDFVGRRDTQVKIRGQRVELGEISAHLQQLVHPSIWCSPEVVKVSSGTELLVVFLVVTEDEVGNGTASILRSTLRVTVDLVDSELRSRLPPAMVPGAYACIKDIPLTLTGKTDHRKLREIGLSLAADMLIFPSNKQESYATNGDRQNRGLHTTLNGNGYQEQNGHAHTHAHTNGDTNGHTNGYVNGSHSHTNSRNKTQKYGHVTYDGTEEEYKIQTLKEIWSDEFHVDIESITLSDSFFAHGGESLTAIKMVGVAFEKGIQLDVPTIFRHPQLSDLVSNCKMSATASPDHPKPFSLLEGEIIPVEAVEACGTCLDNIEDVYPCTPLQEGLITASISKSTAYVGQKAFLLPDGINFERLALAWQRVVQTHQILRTRIFDTESHGLLQAVLTDGKVFLGIQKRDLKSYLEDDNDRKMGLGTELCRCAIVRESGCSYFVLTMHHAIYDGWTLPRIGSEVFKAYQGVRVEPNMGFNAFIKHIKSLPSQTANKFWAHQLANPGESAVFPIVPLYIQEPKSDSTVSKRFPVPQNANSGVSMPSLLRSAWALLVSKLSDSNDVTFGATVSGRNVPIYGIKDLLSPTISTVPVRVKIDKDSNIETFIATVQDDSLSAIPFENFGLQNIRKINTDTREGSKFQTLFVVHPPNSTTPDQTLNLSLADHELKDILENLDISSVLSNFNEYGLMVIVTQEQDSLIVQASYDSRVLETDQVILLLDQFAHVAEQIGQPANLACKVQELQFASGKDVETIWTWNSTRVPGLKECIHDVICRTIAVQPHGQAISAWDGNLTFEELNVLSLRLAHILRSKGVGRGSLVPICMEKSKWATIAMLGILRIGAGFIAMDVRHQPRQRLQTIADAVNSKWIVTAGPATELVPDVSEGVIVCDQDLQIETSDFPVPLEPVCSASSDTAFVVFTSGTTGVPKGIVITHENFCSTIQHHAHQLKISKESRIYDYASYSFDIAVHNSLMAMCLGACLCIPSEDERENDIEGSFERLQANWTDITPSVARLVDPTGVPGLKTLVLSGEAVRKDLVERWATKVNLINAYGPAECQICTIQENIIDPQQAAHIGRAVGCTAWIIDPENDSLCPIGAVGELVIEGPIVSPGYLNATRDAFIQDPKWLIEGSASIPGRRGSVYRTGDLCRFRPDGTIIYISRATTQIKINGQRIELEDVEFYVQQAMATPGQVIASVVNFDGVNHLTAFLAPVPTLKTNDKFHGLGKDVEPTVELIPPPIGLQNKLKDALPAYMIPTVFLKISHIPLTTTRKIDRRQLNDCASRISRDDLIALDQEGTGPVKIELSEKQENMARLWAQVLKLNSSKIGLHSDFFRLGGESISAMRLVKYARKEGLVLTVADIFRHSRFDQLVMIATELTSRENTAEYFNGKLQPFALVPMNHRDSLISTAAMACNLPSDDIIDIYACTPFQEGVFALTASNSSAYVQHTELRFSDELNLDQVLDAWVSVIAANPILRTRFIQSEDAKLMQVVVRPQKQAWKWYYSPQEYLSEAENIPFGLGDPLFCFGLVRHGSTSSPGHTLIWTLHHAVYDAWTMDLILRQVSSCYYGEKQAESGPDYSVFVDFLRHQESESANWWKSYLSGSSDASIFPKMPISAAESQIDNTIRKEFAMPNIVPPGYSPAVILRAAWAAAVARYTGDESVLFGETRLGRNVPVSGIDKLLGPTIASVPLLVHIDREQTIGSLLYAIREDGLQMQPFEHLGLQNISHISEDTKAACKFQTLLVFLENAEDVDSSSIFKIDETIDDIRNFNSYYLLVYFTLNQKGLVAQAVFKDSAISSGQVEFLLEQVQSIFSKLCESPLDTPLRSLDLASEQDLAKIWNWNATSAEAVDKFVHELIAEKARQHPNKLAVFAHDGQITYKELDDYSTNLASQLIGRGIGLGCFVPLCFEKSAMVPVCMLAVIKTGAAFYVMDVSYPEGRLKLITETLKASLMLASPSQQWLAKRLAGNILVVDSVCCTDNTYRSSHPVIEDPSRNTNRLMYVCFTSGSTGLPKGVMVTHKNISSAAVAQTQDLDFDPEDRVYDFSSHAFDANIWHFYLGFIVGACVCIPSQEDRIGNLAGSITFFQSTALFLTPSVARTLDPKELPTVKRLYLGGEAVTPLDVSKWVEHLDLWGAYGPTETTPLCIFTRLHSPEFASNIGKGVGVRSWICNPNNNEELMAIGAVGEMVNEGPLVTQGYYEQPEKTAKVFIENPEFLLRGYKEIPGRRGRLYRTGDLVRYAFDGSIEYLGRADTQVKLRGQRVEFGEIEYHLNNALPGTSSICEVIIHPSSRMPMLAAFCTLSSSMDTLNETGARAYLCKRVPPYMVPEFFFTIPEIPKNPSGKVDRLKLRSFGPQVLLERSTSHEEGSVTERVHGPLTEMETTLAELWATAVDHDVTWLGMESEFADVGGDSIAAMKLSNLARRHELSLTVKDIINSSNLAGMAIKIQPIHESFASPQPFSLLPPSRIDQTVARAAMTCGVSIDSITDIYPCTPLQVELFSLTMKQPQAYIKRSVFEVPTSVNFEKLIESWDSVFDINAILRTRFVEVDDLGLLQVVIKGHQRKKYGSLDSFIQACSQERLDFGSPLSHLAVVEDSVALKIAWTIHHALYDEWSTLIIEEQLRQAYRSRCIPRPPDYSEFVRYIRTNNHEEARGFWRNSLAGCISAKIYPELPVGNYQVRPRKAFKRSLQYSARPGVNIQATIHAAWALIVSRLSASDDVVFSTTLAGRNAPVAGIEQMVGPTITPVPIRVKLGNQKQSVQSMLDMIEKDIAKMAPYQHIGTKNIERINDDTRAACKFRTLIVVTPTSYSTTHELQDIKTETYGVNSEEGQAFHTIPLVLFFFPGESGLDLEIVFDPVILHEREIERLTGRLETVLSAFSTANSVSDIQCIGREDLEDVWKWNAILPSSSKKLLHEDILECVQRAPDKVAIEAWDCKITYSQLDQLSENHAVHLNNYNVRKGTVVPILSLKSGLVPVAALAVLRAGGTLLPLDITQPVQRLKMIIDQVKPNVVMAGLSSIGIASQLCENVIVIKSCVDITPCAHGDAVYFETPSPDDVACILFTSGSTGIPKGVKQTHRGLSSAIKHQARESGFNENTRAFEFASYGFDVSWNMIFKVLAVGGTLCVPEEEERQNDLARALNRTAATLTELTPSVARLINPQQLTSLTTLILSGESVDPREFAHWKPQNHHQLMPVGAIGEIIIEGPIVGSGYYNNENLTSASYVHDVPWLRNDHDGNDARTSRVFKSGDLARFDSKGNIHFIARKDLQVKLNGQRIELEEVQHHVRNLMHDFVGPVISCVLGDSKQRSDQKLATFLVNKHGNTQGTCLAVPEEKAVEQLETLDERLREMLPKYMVPSIYYFVTAVPRTNNGKIDMKRLVEVAAMARPDQIYRGRTDRQRVRRIPSTPTEMKMQQLWAAALEVPIAEIGADDTFFNLNGDSISAMKLVAGARSEGFDLRVSDVFETPRLSELATKIAPRITKKQLAVSTIRPFELLGESANIVAIRSEVAAKCGMQDPGAVKDVYPCTPLQESMLAATIRDPRAFISMRVYRIRQGVDLVRLENAWATVVAQHPILRTRLVDLEHHGLTQAIFEESHIIWQTYVDMDSFLRHYEEQKMGPTTTLTRWALIDEADDWKLVWTIHHAIYDGWVLPIVEEEVRKTYFGSEQDKQYLDMKPLVKYILQEEKAKSIDFWARLLAGSEESIVYPPLPSHKYESSPATYLERTISADLSSSRGINLSALLYGSWSVLVSHMTGIPKVSFGAILTGRNAPVDGIDRMIGPAVTTVPILVDANPSFSVRKFMDRLQDMTVQRMPHEHLGVHAIRRINDACEAGCRFQTVLVIQPPGGNGHDTSNIQDSFLMEEVDETTIEGFPDQHSVLNQYGLMIEILPRGKEIKVRASFDSNLISTSQLSKTISRWERIINQISQTLSQGVHTTIQSLDSLSQQDIEEIWTWNKELPDVVDDRFVFEIIQEIAGRHPDALAIDAWDGQLTYRDLESLSTRVSELLVSFGVGPGSFVPLLFHKSMWTNVSMLGVLKVGAAFVPLDFSHPEGHLRAVMQPLNADIILCADNTRDRAARLSRRAIIVDERSLNADHGNNLATDIPNASVSHTGNAALHIDDLAYAVFTSGSTGAAKGVKVSHKNLVTAIHHHCKPERFQIGLNTRSLDSSSYSFDACIFNFFYTVTQGGCLCVPNDEALKGDIGAFMRQYKVNWAQLVPSVARTLNPKVLPDLKDLILTGEPLTRTDIETWCHNVRLFNVYGPTECTILCSISSPIKGSSHFGYIGRGQGANIWLTEIGNPDKLVPIGVPGEILIEGPIIGAGYLGPYQYPLVEDPPWLLAGTGHISGRQGKLFRTGDQALYTDDGTLVFIGRIGTDIKLRGQRVDIVAVEDIIRRHVPSGLEIAVGIARITVGGKVLAREMLLCFASQNQTFRDNGASPQNKLNDILRALVADIIPELDAAMPKYLHPEAFVALSSMPKTSSGKTDRRCLKEAEKQLRLHDLIWISTEMAESTNTPPSTQEEKVIAALWAEVIGIEHESISREDDFFKLGGDSLGVMRLTTKAHRLGLVLKSNDVFRNSKLASLAEKISWESIGPSEIAPYKPYSLVPEISDIDAFTANHIVPSLNIEANQVEDILPANGFQVDYIHNKEEPLGLRYAYLDIGPDVQWQRLIQACRTMLQGYECFRARFILYKGRYYQIILRDAPFIIEEISATQQIAIFSQQLCRADLHAASLSDVFSKMTLVNVGINRRRVILRLSHMQHDGWCTTQLLNAVAAAFNSLEIEKTPKWTSVLHYRHLMVEESCRYWRTKLQGATQITPSLVYKPGGSKVRTLRSYALSNFHASDDNRRTRPTVVVNVAWALILEQLAGHQDVVFGNVTTGRNGNMPGLDSVVGPCVNMLPMRLQLQSHSTTNREHKLRDLVEASAQQVDDGAFHNGLDWDELIDKCTTCVSGSRYKSAVHFRNMEFEPELSLGGDRVVVQWYELVETPRWTTVLVYPEENVLRLWLLADPAQIGDDGADEILHMLAGYCEEIVQSLQT.

A disordered region spans residues 95–124; it reads PENLNGHLIGSTNGHKKQWENDSADDKRGQ. A compositionally biased stretch (basic and acidic residues) spans 111-124; the sequence is KQWENDSADDKRGQ. The segment at 217–622 is adenylation (A) domain 1; sequence FTENVQRYPT…GRRDTQVKIR (406 aa). The region spanning 816–892 is the Carrier 1 domain; sequence TEEEYKIQTL…DLVSNCKMSA (77 aa). Residues 821–889 form a thiolation (T) domain 1 region; sequence KIQTLKEIWS…QLSDLVSNCK (69 aa). Ser-853 is subject to O-(pantetheine 4'-phosphoryl)serine. The segment at 926–1333 is condensation (C) domain 1; it reads EDVYPCTPLQ…AHVAEQIGQP (408 aa). Residues 1390–1768 form an adenylation (A) domain 2 region; it reads DGNLTFEELN…ISRATTQIKI (379 aa). The 77-residue stretch at 1902-1978 folds into the Carrier 2 domain; sequence IELSEKQENM…QLVMIATELT (77 aa). Residues 1907-1975 are thiolation (T) domain 2; sequence KQENMARLWA…RFDQLVMIAT (69 aa). Ser-1939 bears the O-(pantetheine 4'-phosphoryl)serine mark. Residues 2022-2438 form a condensation (C) domain 2 region; sequence DIYACTPFQE…DLASEQDLAK (417 aa). Residues 2459–2859 form an adenylation (A) domain 3 region; that stretch reads AEKARQHPNK…GRADTQVKLR (401 aa). The Carrier 3 domain occupies 2976 to 3052; it reads GPLTEMETTL…GMAIKIQPIH (77 aa). The interval 2977-3049 is thiolation (T) domain 3; it reads PLTEMETTLA…NLAGMAIKIQ (73 aa). At Ser-3013 the chain carries O-(pantetheine 4'-phosphoryl)serine. The condensation (C) domain 3 stretch occupies residues 3089-3482; sequence DIYPCTPLQV…LETVLSAFST (394 aa). Residues 3523-3873 form an adenylation (A) domain 4 region; sequence VQRAPDKVAI…IARKDLQVKL (351 aa). In terms of domain architecture, Carrier 4 spans 4005-4081; it reads IPSTPTEMKM…ELATKIAPRI (77 aa). Positions 4010-4078 are thiolation (T) domain 4; the sequence is TEMKMQQLWA…RLSELATKIA (69 aa). Ser-4042 carries the post-translational modification O-(pantetheine 4'-phosphoryl)serine. Residues 4123-4549 are condensation (C) domain 4; it reads KDVYPCTPLQ…QSLDSLSQQD (427 aa). The interval 4574-4982 is adenylation (A) domain 5; it reads QEIAGRHPDA…GRIGTDIKLR (409 aa). Residues 5118–5194 enclose the Carrier 5 domain; sequence PPSTQEEKVI…SLAEKISWES (77 aa). The thiolation (T) domain 5 stretch occupies residues 5123–5191; the sequence is EEKVIAALWA…KLASLAEKIS (69 aa). An O-(pantetheine 4'-phosphoryl)serine modification is found at Ser-5155. The segment at 5260-5556 is condensation (C) domain 5; that stretch reads AYLDIGPDVQ…DKCTTCVSGS (297 aa).

The protein belongs to the NRP synthetase family.

Its pathway is mycotoxin biosynthesis. Its function is as follows. Nonribosomal peptide synthetase; part of the gene cluster that mediates the biosynthesis of the mycotoxin cyclochlorotine, a hepatotoxic and carcinogenic cyclic chlorinated pentapeptide. Within the pathway, The NRPS cctN initially catalyzes the condensation of L-serine (Ser), Pro, L-2-aminobutyrate (2Abu), Ser, and beta-Phe in this order. During the chain elongation, side-chain hydroxy group of Ser4 would be used as a nucleophile, giving isocyclotine as a product of terminal condensation-like (CT) domain-catalyzed cyclization. After the dichlorination of Pro2 catalyzed by cctP2 to produce isocyclochlorotine, the cctO-mediated transacylation of isocyclochlorotine can furnish cyclochlorotine. The subsequent hydroxylation of cyclochlorotine by cctR yields hydroxycyclochlorotine as the final product. CctP1 probably acts as a phenylalanine aminomutase and provides the uncommon building block beta-Phe. Furthermore, 2Abu can be synthesized from threonine by one of the threonine dehydratases and transaminases localized outside of the cluster. The functions of the remaining proteins encoded by the cluster, cctM and cctT, have not been identified yet. The chain is Cyclochlorotine synthetase from Talaromyces islandicus (Penicillium islandicum).